The following is a 610-amino-acid chain: Phosphoenolpyruvate carboxykinase [GTP] (610 aa).

Residues Arg-82 and 221-223 (YGG) contribute to the substrate site. Residues Lys-230 and His-250 each coordinate Mn(2+). Ser-272 contributes to the substrate binding site. Position 273–278 (273–278 (ACGKTN)) interacts with GTP. Cys-274 is an active-site residue. Residue Asp-297 participates in Mn(2+) binding. 387-389 (NSR) is a substrate binding site. GTP-binding positions include Arg-389, Arg-420, and 515 to 518 (FGDN).

Belongs to the phosphoenolpyruvate carboxykinase [GTP] family. In terms of assembly, monomer. It depends on Mn(2+) as a cofactor.

It is found in the cytoplasm. It carries out the reaction oxaloacetate + GTP = phosphoenolpyruvate + GDP + CO2. It participates in carbohydrate biosynthesis; gluconeogenesis. Its function is as follows. Involved in the gluconeogenesis. Catalyzes the conversion of oxaloacetate (OAA) to phosphoenolpyruvate (PEP), the rate-limiting step in the metabolic pathway that produces glucose from lactate and other precursors derived from the citric acid cycle. The sequence is that of Phosphoenolpyruvate carboxykinase [GTP] from Corynebacterium glutamicum (strain ATCC 13032 / DSM 20300 / JCM 1318 / BCRC 11384 / CCUG 27702 / LMG 3730 / NBRC 12168 / NCIMB 10025 / NRRL B-2784 / 534).